The sequence spans 116 residues: Large ribosomal subunit protein uL18 (116 aa).

The protein belongs to the universal ribosomal protein uL18 family. As to quaternary structure, part of the 50S ribosomal subunit; part of the 5S rRNA/L5/L18/L25 subcomplex. Contacts the 5S and 23S rRNAs.

Functionally, this is one of the proteins that bind and probably mediate the attachment of the 5S RNA into the large ribosomal subunit, where it forms part of the central protuberance. The chain is Large ribosomal subunit protein uL18 from Novosphingobium aromaticivorans (strain ATCC 700278 / DSM 12444 / CCUG 56034 / CIP 105152 / NBRC 16084 / F199).